Reading from the N-terminus, the 295-residue chain is Phosphoserine phosphatase, chloroplastic (295 aa).

The transit peptide at 1–54 (MEALTTSRVVPVQVPCRKLSSLFANFSCLELRRYPCRGLVSIMNHPKLLRPVTA) directs the protein to the chloroplast. The active-site Nucleophile is the Asp89. Asp89 and Asp91 together coordinate Mg(2+). Asp91 serves as the catalytic Proton donor. Residues Glu98, Arg134, 178 to 179 (SG), and Lys227 contribute to the substrate site. Asp248 lines the Mg(2+) pocket.

It belongs to the HAD-like hydrolase superfamily. SerB family. Mg(2+) serves as cofactor. As to expression, ubiquitous. Mainly expressed in shoot and root meristems, vasculature, pollen, anthers, carpels and seeds.

The protein localises to the plastid. Its subcellular location is the chloroplast. The enzyme catalyses O-phospho-L-serine + H2O = L-serine + phosphate. It carries out the reaction O-phospho-D-serine + H2O = D-serine + phosphate. It participates in amino-acid biosynthesis; L-serine biosynthesis; L-serine from 3-phospho-D-glycerate: step 3/3. With respect to regulation, approximately 60% inhibition of PSP activity is observed in presence of 10 mM serine. Catalyzes the last step in the plastidial phosphorylated pathway of serine biosynthesis (PPSB). The reaction mechanism proceeds via the formation of a phosphoryl-enzyme intermediates. Required for embryo, pollen and root development. May be required preferentially for serine biosynthesis in non-photosynthetic tissues. In Arabidopsis thaliana (Mouse-ear cress), this protein is Phosphoserine phosphatase, chloroplastic (PSP).